We begin with the raw amino-acid sequence, 1011 residues long: CRM-domain containing factor CFM2, chloroplastic (1011 aa).

A chloroplast-targeting transit peptide spans 1 to 45 (MLLPLFHQQPLILAKTFPDRIFPPFLVPNTLVSRRNVSRANSGIF). Residues 77 to 90 (HDSPTRRITGEESG) are compositionally biased toward basic and acidic residues. Residues 77-96 (HDSPTRRITGEESGKNSPGE) are disordered. CRM domains lie at 164–260 (LTLP…YFVS), 376–473 (PKLT…AVSS), and 577–677 (EGIT…QCLR). 2 disordered regions span residues 721-810 (DSAT…GNSL) and 841-872 (LNAN…DGLV). Residues 722–736 (SATNETWSDGESSNM) show a composition bias toward polar residues. Basic and acidic residues predominate over residues 743 to 757 (ENQHTEPEKAREKIE). Positions 762–771 (SDLSVPSSGE) are enriched in polar residues. The span at 772–782 (ENWEDDSEGEV) shows a compositional bias: acidic residues. A compositionally biased stretch (polar residues) spans 849–859 (GSSTGSGSQIS). Residues 873 to 972 (TDLSNRERLI…WGAEEEMKSF (100 aa)) form the CRM 4 domain.

In terms of assembly, interacts with RNA. Part of large ribonucleo-protein particles that contain CAF1 and/or CAF2.

The protein localises to the plastid. Its subcellular location is the chloroplast stroma. Binds specific group II introns in chloroplasts and facilitates their splicing. Acts on both subgroup IIA and subgroup IIB introns. The substrates of the subgroup IIB also require the CRM domain proteins CAF1 or CAF2, with a simultaneous binding of CFM2 and CAF1 or CAF2. Can bind to and promote the splicing of the single group I intron in chloroplast tRNA transcript of trnL-UAA gene. The polypeptide is CRM-domain containing factor CFM2, chloroplastic (Arabidopsis thaliana (Mouse-ear cress)).